Consider the following 95-residue polypeptide: Beta-alanine degradation protein BauB (95 aa).

The Cupin type-2 domain occupies 23–90 (WRFAPGAETG…NASAHEVVFV (68 aa)).

Its function is as follows. Involved in the degradation of beta-alanine. The sequence is that of Beta-alanine degradation protein BauB (bauB) from Pseudomonas aeruginosa (strain ATCC 15692 / DSM 22644 / CIP 104116 / JCM 14847 / LMG 12228 / 1C / PRS 101 / PAO1).